A 358-amino-acid chain; its full sequence is MSKRVFNFYPGPCTLPLPVLQQAQKELLDFEGCGMSVMEISHRSQRFEAILAETLSLAKKLIGAPDDFCVLLIAGGAHQQFAMTALNLLADGGSAGIVNSGLWAKRALEEAQRVGKMVELWRAPDGKCTTLPDLKTLTVPKNLRYVHLTSNETVDGLQFPELPDLGVPLVLDVSSDYYTRPLPWDYCDIVYGGVQKNLAPSGMALVFVRKQCLREHTNLARFFCYKHHADANSLLNTPPTWQIYILHLVLKWIEQQGGVAHFAALAQKRSAKLYDFIDNNDFYRNDVEKKYRSKINVVMRTPSDALDTQFWQEAETHALVGLKGHSAVGGLRASLYNAMEMAGVEALIDFMHDFAQRH.

Residue Arg-43 participates in L-glutamate binding. Pyridoxal 5'-phosphate is bound by residues Trp-103, Thr-153, Asp-172, and Gln-195. Residue Lys-196 is modified to N6-(pyridoxal phosphate)lysine. Asn-236–Thr-237 contacts pyridoxal 5'-phosphate.

It belongs to the class-V pyridoxal-phosphate-dependent aminotransferase family. SerC subfamily. Homodimer. It depends on pyridoxal 5'-phosphate as a cofactor.

The protein resides in the cytoplasm. It catalyses the reaction O-phospho-L-serine + 2-oxoglutarate = 3-phosphooxypyruvate + L-glutamate. It carries out the reaction 4-(phosphooxy)-L-threonine + 2-oxoglutarate = (R)-3-hydroxy-2-oxo-4-phosphooxybutanoate + L-glutamate. It participates in amino-acid biosynthesis; L-serine biosynthesis; L-serine from 3-phospho-D-glycerate: step 2/3. The protein operates within cofactor biosynthesis; pyridoxine 5'-phosphate biosynthesis; pyridoxine 5'-phosphate from D-erythrose 4-phosphate: step 3/5. Catalyzes the reversible conversion of 3-phosphohydroxypyruvate to phosphoserine and of 3-hydroxy-2-oxo-4-phosphonooxybutanoate to phosphohydroxythreonine. This chain is Phosphoserine aminotransferase, found in Dichelobacter nodosus (strain VCS1703A).